We begin with the raw amino-acid sequence, 217 residues long: Carbon disulfide hydrolase (217 aa).

Residues Cys-39, His-98, and Cys-101 each contribute to the Zn(2+) site. Positions 192–217 are disordered; the sequence is DKEKRARTDCTPTPYGVKGNQPPRWK.

Belongs to the beta-class carbonic anhydrase family. Forms only homooctamers in solution. Zn(2+) is required as a cofactor.

It carries out the reaction carbon disulfide + 2 H2O = 2 hydrogen sulfide + CO2 + 2 H(+). Its pathway is sulfur metabolism; hydrogen sulfide biosynthesis. Catalyzes the conversion of carbon disulfide into hydrogen sulfide and carbon dioxide, with carbonyl sulfide as an intermediate. Likely plays a key role in sulfur metabolism that allows A.thiooxidans S1p to grow on carbon disulfide as the main carbon and energy source. Does not show carbonic anhydrase activity (hydration of CO(2) to carbonate). In Acidithiobacillus thiooxidans (Thiobacillus thiooxidans), this protein is Carbon disulfide hydrolase.